We begin with the raw amino-acid sequence, 409 residues long: Ubiquitin-associated domain-containing protein 1 (409 aa).

Met-1 carries the post-translational modification N-acetylmethionine. Residues Leu-14–Ser-98 form the Ubiquitin-like domain. The 45-residue stretch at Asp-187–His-231 folds into the UBA 1 domain. Positions Pro-235–Glu-273 are disordered. A compositionally biased stretch (low complexity) spans Ala-245–Ala-264. The UBA 2 domain maps to Arg-292 to Asp-332. Positions Asn-357–Met-396 constitute an STI1 domain.

In terms of assembly, component of the KPC complex composed of RNF123/KPC1 and UBAC1/KPC2. Interacts (via ubiquitin-like domain) with RNF123. Interacts (via ubiquitin-like and UBA domains) with the proteasome via its N-terminal domain.

It localises to the cytoplasm. The protein operates within protein modification; protein ubiquitination. In terms of biological role, non-catalytic component of the KPC complex, a E3 ubiquitin-protein ligase complex that mediates polyubiquitination of target proteins, such as CDKN1B and NFKB1. The KPC complex catalyzes polyubiquitination and proteasome-mediated degradation of CDKN1B during G1 phase of the cell cycle. The KPC complex also acts as a key regulator of the NF-kappa-B signaling by promoting maturation of the NFKB1 component of NF-kappa-B by catalyzing ubiquitination of the NFKB1 p105 precursor. Within the KPC complex, UBAC1 acts as an adapter that promotes the transfer of target proteins that have been polyubiquitinated by RNF123/KPC1 to the 26S proteasome. The sequence is that of Ubiquitin-associated domain-containing protein 1 (Ubac1) from Rattus norvegicus (Rat).